A 596-amino-acid chain; its full sequence is Aspartate--tRNA(Asp/Asn) ligase (596 aa).

E172 is an L-aspartate binding site. The aspartate stretch occupies residues 196–199 (QLFK). Residue R218 participates in L-aspartate binding. ATP-binding positions include 218–220 (RDE) and Q227. Residue H455 coordinates L-aspartate. E489 is a binding site for ATP. An L-aspartate-binding site is contributed by R496. Position 541–544 (541–544 (GLDR)) interacts with ATP.

The protein belongs to the class-II aminoacyl-tRNA synthetase family. Type 1 subfamily. As to quaternary structure, homodimer.

It is found in the cytoplasm. It catalyses the reaction tRNA(Asx) + L-aspartate + ATP = L-aspartyl-tRNA(Asx) + AMP + diphosphate. Aspartyl-tRNA synthetase with relaxed tRNA specificity since it is able to aspartylate not only its cognate tRNA(Asp) but also tRNA(Asn). Reaction proceeds in two steps: L-aspartate is first activated by ATP to form Asp-AMP and then transferred to the acceptor end of tRNA(Asp/Asn). The chain is Aspartate--tRNA(Asp/Asn) ligase from Bordetella avium (strain 197N).